The sequence spans 230 residues: uncharacterized protein (230 aa).

This is an uncharacterized protein from Sinorhizobium fredii (strain NBRC 101917 / NGR234).